The following is a 514-amino-acid chain: Maturase K (514 aa).

It belongs to the intron maturase 2 family. MatK subfamily.

Its subcellular location is the plastid. It is found in the chloroplast. Its function is as follows. Usually encoded in the trnK tRNA gene intron. Probably assists in splicing its own and other chloroplast group II introns. In Phoenix dactylifera (Date palm), this protein is Maturase K.